The sequence spans 948 residues: PHD finger protein 14 (948 aa).

The disordered stretch occupies residues 22-302 (DYDSSDDSDF…LSQSKSNEDS (281 aa)). 2 positions are modified to phosphoserine: Ser26 and Ser29. Residues 36 to 47 (ASDSEGSGNGSE) are compositionally biased toward low complexity. A compositionally biased stretch (acidic residues) spans 60–71 (DSEENILEEELN). Positions 72–85 (EDIKVKEEQLKNSA) are enriched in basic and acidic residues. Ser84 and Ser91 each carry phosphoserine. Composition is skewed to basic and acidic residues over residues 95–110 (QLIKMEKKEEEENGER) and 117–139 (KEKEKEKEKEKEKEREKEKEKAT). Positions 140–174 (VSENVAASAAATTPATSPPAVNTSPSVPTTTTATE) are enriched in low complexity. Ser196 carries the post-translational modification Phosphoserine. 2 stretches are compositionally biased toward acidic residues: residues 199 to 212 (ELNDMDDYDSEDDN) and 233 to 256 (DGDNEDDEDEGSGSDEDENDEGND). Tyr206 is modified (phosphotyrosine). Ser208 is modified (phosphoserine). The residue at position 287 (Thr287) is a Phosphothreonine. Over residues 288–297 (NDSLTLSQSK) the composition is skewed to polar residues. 5 positions are modified to phosphoserine: Ser290, Ser294, Ser298, Ser302, and Ser308. The PHD-type 1 zinc finger occupies 319–380 (ILICCVCLGD…PWFCDACKCG (62 aa)). Positions 322, 325, 339, 342, 347, and 350 each coordinate Zn(2+). A Phosphoserine modification is found at Ser359. The Zn(2+) site is built by Cys374, Cys377, Cys385, Cys388, His405, Cys408, Cys441, Cys444, Cys458, Cys463, His468, Cys471, Cys495, and His498. A C2HC pre-PHD-type zinc finger spans residues 382 to 415 (SPSCELCPNQDGIFKETDAGRWVHIVCALYVPGV). A PHD-type 2 zinc finger spans residues 439–499 (KECSFCEDPR…PFFAYCKQHA (61 aa)). The residue at position 530 (Ser530) is a Phosphoserine. Residues 630–678 (MIQIQENMAEQKNIKDKLENEQEKLHVEYNKLCESLEELQNLNGKLRSE) are a coiled coil. A Glycyl lysine isopeptide (Lys-Gly) (interchain with G-Cter in SUMO2) cross-link involves residue Glu648. Position 651 is a phosphoserine (Gln651). The PHD-type 3 zinc-finger motif lies at 725 to 779 (LYSCGICKKNHDQHLLLLCDTCKLHYHLGCLDPPLTRMPRKTKNSYWQCSECDQA). Zn(2+)-binding residues include Cys728, Cys731, Cys743, Cys746, His751, Cys754, Cys773, and Cys776. Ser781, Ser782, and Ser835 each carry phosphoserine. The tract at residues 811 to 862 (VPQDVPPEPKKIPIRNTRTRGRKRSFVPEEEKHEERVPRERRQRQSVLQKKP) is disordered. Positions 836–850 (FVPEEEKHEERVPRE) are enriched in basic and acidic residues. The PHD-type 4 zinc finger occupies 868–921 (RTECATCKGTGDNENLVRCDECRLCYHFGCLDPPLKKSPKQTGYGWICQECDSS). Residues Cys871, Cys874, Cys886, Cys889, His894, Cys897, Cys915, and Cys918 each contribute to the Zn(2+) site. The interval 920-948 (SSSSKEDENEAERKNISQELNMEQKNPKK) is disordered. Residues 922–935 (SSKEDENEAERKNI) are compositionally biased toward basic and acidic residues. Polar residues predominate over residues 936–948 (SQELNMEQKNPKK).

It is found in the nucleus. The protein localises to the chromosome. Its subcellular location is the cytoplasm. Functionally, histone-binding protein. Binds preferentially to unmodified histone H3 but can also bind to a lesser extent to histone H3 trimethylated at 'Lys-9' (H3K9me3) as well as to histone H3 monomethylated at 'Lys-27' (H3K27ac) and trimethylated at 'Lys-27' (H3K27me3). Represses PDGFRA expression, thus playing a role in regulation of mesenchymal cell proliferation. Suppresses the expression of CDKN1A/p21 by reducing the level of trimethylation of histone H3 'Lys-4', leading to enhanced proliferation of germinal center B cells. This is PHD finger protein 14 (PHF14) from Homo sapiens (Human).